The sequence spans 954 residues: Mycolic acid-containing lipids exporter MmpL11 (954 aa).

The next 12 helical transmembrane spans lie at 11 to 31 (FRWA…YLAL), 188 to 208 (IVLI…LPLV), 214 to 234 (VVVT…SVFV), 235 to 255 (TSTV…FILM), 279 to 299 (GLAV…IYLI), 312 to 334 (ILAV…ATFG), 373 to 393 (AIAA…MVLG), 529 to 549 (TQPL…LVSI), 559 to 579 (VLMT…VFQW), 597 to 617 (IPPL…IFLL), 648 to 668 (AALI…PLVA), and 670 to 690 (LGVA…LVLV).

The protein resides in the cell inner membrane. Contributes to cell wall biosynthesis and biofilm formation. Transports the mycolic acid-containing lipids monomeromycolyl diacylglycerol (MMDAG) and mycolate ester wax (WE) to the bacterial surface. The sequence is that of Mycolic acid-containing lipids exporter MmpL11 from Mycolicibacterium smegmatis (strain ATCC 700084 / mc(2)155) (Mycobacterium smegmatis).